We begin with the raw amino-acid sequence, 541 residues long: Zinc finger protein 655 (541 aa).

The interval 1-22 (MEEVTSQEAAESPRGHFQPLEN) is disordered. 6 C2H2-type zinc fingers span residues 243–265 (YKCDTCGKTFHQASALTRHQRIH), 271–293 (YKCKECEKSFSQSSSLSRHKRIH), 334–356 (YKCGTCERVFSRSVHLTQHQRTH), 361–383 (CKCTVCGSDFCHTSYLVEHQRLH), 411–433 (YSCNECGKDFRLNSHLIQHQRIH), and 439–461 (HECNECGKSFSQTSCLIQHHKMH). The C2H2-type 7; degenerate zinc finger occupies 495-517 (FDCDAWEENFSQRAHLIQHERVH).

Belongs to the krueppel C2H2-type zinc-finger protein family. As to quaternary structure, interacts with VAV1 and CDK4. Interacts with INTS13; promoting association with the integrator complex.

Its subcellular location is the nucleus. Probable transcription factor. The polypeptide is Zinc finger protein 655 (Znf655) (Mus musculus (Mouse)).